We begin with the raw amino-acid sequence, 132 residues long: ATP synthase epsilon chain (132 aa).

The protein belongs to the ATPase epsilon chain family. In terms of assembly, F-type ATPases have 2 components, CF(1) - the catalytic core - and CF(0) - the membrane proton channel. CF(1) has five subunits: alpha(3), beta(3), gamma(1), delta(1), epsilon(1). CF(0) has three main subunits: a, b and c.

The protein resides in the cell inner membrane. Produces ATP from ADP in the presence of a proton gradient across the membrane. The polypeptide is ATP synthase epsilon chain (Parvibaculum lavamentivorans (strain DS-1 / DSM 13023 / NCIMB 13966)).